A 524-amino-acid polypeptide reads, in one-letter code: Na(+)/H(+) antiporter NhaG (524 aa).

11 helical membrane passes run Leu6 to Ile26, Pro33 to Phe53, Phe59 to Leu79, Val98 to Trp118, Ala126 to Phe146, Leu169 to Ile189, Gly193 to Leu213, Phe242 to Ile262, Phe283 to Ile303, Trp312 to Ile332, and Asp374 to Ile394.

It belongs to the monovalent cation:proton antiporter 1 (CPA1) transporter (TC 2.A.36) family.

Its subcellular location is the cell membrane. Its function is as follows. Na(+)/H(+) antiporter that extrudes sodium in exchange for external protons. Can also transport lithium. The chain is Na(+)/H(+) antiporter NhaG (nhaG) from Bacillus atrophaeus.